A 298-amino-acid polypeptide reads, in one-letter code: Ethanolamine ammonia-lyase small subunit (298 aa).

Adenosylcob(III)alamin-binding residues include Val210, Glu231, and Cys261.

Belongs to the EutC family. In terms of assembly, the basic unit is a heterodimer which dimerizes to form tetramers. The heterotetramers trimerize; 6 large subunits form a core ring with 6 small subunits projecting outwards. The cofactor is adenosylcob(III)alamin.

Its subcellular location is the bacterial microcompartment. The catalysed reaction is ethanolamine = acetaldehyde + NH4(+). Its pathway is amine and polyamine degradation; ethanolamine degradation. Functionally, catalyzes the deamination of various vicinal amino-alcohols to oxo compounds. Allows this organism to utilize ethanolamine as the sole source of nitrogen and carbon in the presence of external vitamin B12. This is Ethanolamine ammonia-lyase small subunit from Salmonella heidelberg (strain SL476).